We begin with the raw amino-acid sequence, 221 residues long: Ribosomal RNA small subunit methyltransferase G (221 aa).

S-adenosyl-L-methionine contacts are provided by residues Gly90, Leu95, 141–142 (VE), and Arg154.

The protein belongs to the methyltransferase superfamily. RNA methyltransferase RsmG family.

Its subcellular location is the cytoplasm. The catalysed reaction is guanosine(527) in 16S rRNA + S-adenosyl-L-methionine = N(7)-methylguanosine(527) in 16S rRNA + S-adenosyl-L-homocysteine. Functionally, specifically methylates the N7 position of guanine in position 527 of 16S rRNA. The polypeptide is Ribosomal RNA small subunit methyltransferase G (Polaromonas naphthalenivorans (strain CJ2)).